A 1628-amino-acid polypeptide reads, in one-letter code: Lysine-specific histone demethylase 1 homolog 3 (1628 aa).

Residues 1-71 (MDGKEKKSGS…KKLSALGKDS (71 aa)) form a disordered region. A compositionally biased stretch (acidic residues) spans 19–28 (FDDDADDDEP). Residues 43–64 (KDKVETESTGKQRQKQVVEKKL) are compositionally biased toward basic and acidic residues. One can recognise an SWIRM domain in the interval 378 to 478 (GRAAAVTAGL…AGISSVNGKA (101 aa)). FAD contacts are provided by E647, R649, R655, and E1077. The interval 1271–1317 (SGKKSLRQANTTNTSRIRRKLNSPDTDSKGKLSNGNDVKTDEEFEDN) is disordered.

The protein belongs to the flavin monoamine oxidase family. FAD is required as a cofactor.

Probable histone demethylase that reduces the levels of histone H3 'Lys-4' methylation in chromatin. This Arabidopsis thaliana (Mouse-ear cress) protein is Lysine-specific histone demethylase 1 homolog 3 (LDL3).